The chain runs to 172 residues: uncharacterized protein (172 aa).

This is an uncharacterized protein from Homo sapiens (Human).